Consider the following 1221-residue polypeptide: DNA topoisomerase 2 (1221 aa).

ATP contacts are provided by residues Asn-65, Asn-94, 122-124 (SSN), 135-142 (GRHGYGAK), and 352-354 (QNK). The Toprim domain maps to 432-546 (RTLIVTEGDS…SLLVRNPGFI (115 aa)). Mg(2+) contacts are provided by Glu-438, Asp-515, and Asp-517. The Topo IIA-type catalytic domain maps to 681-1097 (LAHSVDGLKP…TPVQLWLGEL (417 aa)). Tyr-771 (O-(5'-phospho-DNA)-tyrosine intermediate) is an active-site residue. Residues 952-961 (GLTQRIHING) are interaction with DNA. The disordered stretch occupies residues 1158–1198 (VPPPTKRGAGGRSDGDGGATAAGAAAAVGGRGEKKGPGRAG). The segment covering 1165–1177 (GAGGRSDGDGGAT) has biased composition (gly residues).

The protein belongs to the type II topoisomerase family. Homodimer. The cofactor is Mg(2+). Mn(2+) is required as a cofactor. It depends on Ca(2+) as a cofactor.

The protein resides in the nucleus. It carries out the reaction ATP-dependent breakage, passage and rejoining of double-stranded DNA.. In terms of biological role, control of topological states of DNA by transient breakage and subsequent rejoining of DNA strands. Topoisomerase II makes double-strand breaks. The sequence is that of DNA topoisomerase 2 (TOP2) from Trypanosoma brucei brucei.